Here is a 438-residue protein sequence, read N- to C-terminus: Thymidine phosphorylase (438 aa).

It belongs to the thymidine/pyrimidine-nucleoside phosphorylase family. In terms of assembly, homodimer.

It catalyses the reaction thymidine + phosphate = 2-deoxy-alpha-D-ribose 1-phosphate + thymine. The protein operates within pyrimidine metabolism; dTMP biosynthesis via salvage pathway; dTMP from thymine: step 1/2. In terms of biological role, the enzymes which catalyze the reversible phosphorolysis of pyrimidine nucleosides are involved in the degradation of these compounds and in their utilization as carbon and energy sources, or in the rescue of pyrimidine bases for nucleotide synthesis. The chain is Thymidine phosphorylase from Agrobacterium fabrum (strain C58 / ATCC 33970) (Agrobacterium tumefaciens (strain C58)).